The sequence spans 167 residues: Ubiquitin-like-conjugating enzyme ATG10 (167 aa).

C133 functions as the Glycyl thioester intermediate in the catalytic mechanism.

The protein belongs to the ATG10 family. Forms homooligomers. Interacts with ATG7 and ATG12.

It is found in the preautophagosomal structure membrane. E2-like enzyme required for the cytoplasm to vacuole transport (Cvt), autophagy and nucleophagy. Acts as an E2-like enzyme that catalyzes the conjugation of ATG12 to ATG5. ATG12 conjugation to ATG5 is required for proper localization of ATG8 to the preautophagosomal structure (PAS). Likely serves as an ATG5-recognition molecule. The chain is Ubiquitin-like-conjugating enzyme ATG10 (ATG10) from Saccharomyces cerevisiae (strain ATCC 204508 / S288c) (Baker's yeast).